A 253-amino-acid polypeptide reads, in one-letter code: MNAATSGIQLNAQTLSQQPAMNTPLIHRSFRDDYTGLVSAGDGLYKRKLKVPSTTRCNKFKWCSIGWSIGALIIFLVYKLEKPHVQPTSNGNLSLIEPEKLVSESQLIQKILNATTPQTTTPEIPSSTEPQELVTEILNTTTPQTTTPEIPSSTEPQELVTEIPSSTEPQEEIFSIFKSPKPEEPGGINSIPQYEQESNNVEDEPPPNKPEEEEDHDNQPLEERHTVPILGDVIIRNKTIIIDGGNETIIIKP.

Residues 62–78 (WCSIGWSIGALIIFLVY) traverse the membrane as a helical segment. A compositionally biased stretch (low complexity) spans 141–158 (TTPQTTTPEIPSSTEPQE). Positions 141–225 (TTPQTTTPEI…HDNQPLEERH (85 aa)) are disordered. Positions 200–216 (NVEDEPPPNKPEEEEDH) are enriched in acidic residues.

It is found in the host membrane. This is an uncharacterized protein from Aedes vexans (Inland floodwater mosquito).